The primary structure comprises 589 residues: ABC transporter G family member 8 (589 aa).

The region spanning 16–261 (LTTSSISYTI…LLFKGFTVPP (246 aa)) is the ABC transporter domain. Residue 62–69 (GPSGAGKS) coordinates ATP. An ABC transmembrane type-2 domain is found at 311 to 521 (TEISLLARRF…ALDALLINEY (211 aa)). 7 consecutive transmembrane segments (helical) span residues 335-355 (ALEALVVGLVLGTIYINIGIG), 365-385 (MFAFTLTFLLSSTTETLPIFI), 412-432 (VFLPYLFVISIIYSVSVYFLI), 441-461 (FGYFVLVIWIILLMANSFVLF), 470-490 (ITGTSLVTILLAAFFLFSGYF), 499-519 (YWLFMYFFSMYKYALDALLIN), and 560-580 (FNVYVLLGFFVLYRVLCFLAL).

This sequence belongs to the ABC transporter superfamily. ABCG family. Eye pigment precursor importer (TC 3.A.1.204) subfamily.

The protein localises to the membrane. The polypeptide is ABC transporter G family member 8 (ABCG8) (Arabidopsis thaliana (Mouse-ear cress)).